A 644-amino-acid chain; its full sequence is Exoribonuclease 2 (644 aa).

Residues Arg189–Lys516 form the RNB domain. In terms of domain architecture, S1 motif spans Gly561–Val643.

This sequence belongs to the RNR ribonuclease family. RNase II subfamily.

The protein resides in the cytoplasm. It carries out the reaction Exonucleolytic cleavage in the 3'- to 5'-direction to yield nucleoside 5'-phosphates.. In terms of biological role, involved in mRNA degradation. Hydrolyzes single-stranded polyribonucleotides processively in the 3' to 5' direction. In Shigella flexneri serotype 5b (strain 8401), this protein is Exoribonuclease 2.